A 183-amino-acid polypeptide reads, in one-letter code: Probable actin-related protein 2/3 complex subunit 3 (183 aa).

This sequence belongs to the ARPC3 family. As to quaternary structure, component of the Arp2/3 complex.

It is found in the cytoplasm. The protein localises to the cytoskeleton. In terms of biological role, functions as a component of the Arp2/3 complex which is involved in regulation of actin polymerization and together with an activating nucleation-promoting factor (NPF) mediates the formation of branched actin networks. This Caenorhabditis elegans protein is Probable actin-related protein 2/3 complex subunit 3 (arx-5).